A 151-amino-acid chain; its full sequence is UPF0735 ACT domain-containing protein SAUSA300_1599 (151 aa).

The ACT domain occupies 74-149; that stretch reads TLILYVTDIV…YVSKVELISM (76 aa).

This sequence belongs to the UPF0735 family.

The protein is UPF0735 ACT domain-containing protein SAUSA300_1599 of Staphylococcus aureus (strain USA300).